The primary structure comprises 156 residues: Small ribosomal subunit protein uS7 (156 aa).

It belongs to the universal ribosomal protein uS7 family. Part of the 30S ribosomal subunit. Contacts proteins S9 and S11.

Its function is as follows. One of the primary rRNA binding proteins, it binds directly to 16S rRNA where it nucleates assembly of the head domain of the 30S subunit. Is located at the subunit interface close to the decoding center, probably blocks exit of the E-site tRNA. This chain is Small ribosomal subunit protein uS7, found in Campylobacter jejuni subsp. jejuni serotype O:6 (strain 81116 / NCTC 11828).